A 161-amino-acid chain; its full sequence is Lincosamide resistance protein (161 aa).

The polypeptide is Lincosamide resistance protein (linA) (Staphylococcus haemolyticus).